The chain runs to 910 residues: Staphylococcal nuclease domain-containing protein 1 (910 aa).

Position 2 is an N-acetylalanine (A2). TNase-like domains follow at residues 18 to 166 (TVQR…MWSE), 193 to 328 (KPVN…IWRD), and 341 to 496 (KQFV…LHSK). T103 bears the Phosphothreonine mark. K193 bears the N6-acetyllysine mark. T240 carries the post-translational modification Phosphothreonine. Short sequence motifs (nuclear localization signal) lie at residues 321 to 325 (RRLRI) and 388 to 392 (KKLRP). Phosphoserine is present on S426. K513 participates in a covalent cross-link: Glycyl lysine isopeptide (Lys-Gly) (interchain with G-Cter in SUMO2). The TNase-like 4 domain occupies 525 to 660 (GRSEAVVEYV…KQKKEKVWAH (136 aa)). Residue K641 is modified to N6-acetyllysine. A Phosphoserine modification is found at S645. In terms of domain architecture, Tudor spans 729-787 (APRRGEFCIAKFVDGEWYRARVEKVESPAKVHVFYIDYGNREILPSTRLGTLPPAFSTR). T779 is modified (phosphothreonine). Phosphoserine is present on residues S785 and S909.

As to quaternary structure, forms a ternary complex with STAT6 and POLR2A. Associates with the RNA-induced silencing complex (RISC). Interacts with the RISC components AGO2, FMR1 and TNRC6A. Interacts with GTF2E1 and GTF2E2. Interacts with PIM1. Interacts with STAT5. Interacts with SYT11 (via C2 2 domain); the interaction with SYT11 is direct. Post-translationally, phosphorylated by PIM1 in vitro. In lactating cows highly expressed in mammary epithelial cells.

Its subcellular location is the cytoplasm. It localises to the nucleus. The protein localises to the melanosome. The enzyme catalyses Endonucleolytic cleavage to nucleoside 3'-phosphates and 3'-phosphooligonucleotide end-products.. Its function is as follows. Endonuclease that mediates miRNA decay of both protein-free and AGO2-loaded miRNAs. As part of its function in miRNA decay, regulates mRNAs involved in G1-to-S phase transition. Functions as a bridging factor between STAT6 and the basal transcription factor. Plays a role in PIM1 regulation of MYB activity. Functions as a transcriptional coactivator for STAT5. The chain is Staphylococcal nuclease domain-containing protein 1 (SND1) from Bos taurus (Bovine).